Reading from the N-terminus, the 81-residue chain is uncharacterized protein (81 aa).

Positions 55–81 are disordered; it reads LDKRNSNNKIEKSENTGENHDNNQDQK.

This is an uncharacterized protein from Thermoproteus tenax virus 1 (strain KRA1) (TTV1).